Here is a 212-residue protein sequence, read N- to C-terminus: Regulator of G-protein signaling 2 (212 aa).

Disordered regions lie at residues 11–33 and 48–69; these read HDCG…REKM and FLQN…PQTF. A necessary for membrane association region spans residues 32 to 66; that stretch reads KMKRTLLKDWKTRLSYFLQNSSSPGKPKTGKKSKP. The interval 79-116 is necessary to inhibit protein synthesis; that stretch reads LWAEAFDELLASKYGLAAFRAFLKSEFCEENIEFWLAC. An RGS domain is found at 83 to 199; sequence AFDELLASKY…LESEFYQDLC (117 aa).

Interacts with GNAQ. Does not interact with GNAI1 and GNAI3. Interacts with EIF2B5. Interacts with PRKG1 (isoform alpha). Phosphorylated by protein kinase C. Phosphorylation by PRKG1 leads to activation of RGS2 activity.

It localises to the cell membrane. It is found in the cytoplasm. The protein resides in the nucleus. The protein localises to the nucleolus. In terms of biological role, regulates G protein-coupled receptor signaling cascades. Inhibits signal transduction by increasing the GTPase activity of G protein alpha subunits, thereby driving them into their inactive GDP-bound form. It is involved in the negative regulation of the angiotensin-activated signaling pathway. Plays a role in the regulation of blood pressure in response to signaling via G protein-coupled receptors and GNAQ. Plays a role in regulating the constriction and relaxation of vascular smooth muscle. Binds EIF2B5 and blocks its activity, thereby inhibiting the translation of mRNA into protein. The sequence is that of Regulator of G-protein signaling 2 (RGS2) from Sus scrofa (Pig).